A 429-amino-acid polypeptide reads, in one-letter code: Adenosylhomocysteinase (429 aa).

Substrate is bound by residues Thr-64, Asp-136, and Glu-161. NAD(+) is bound at residue 162 to 164 (TTT). Substrate contacts are provided by Lys-191 and Asp-195. NAD(+) is bound by residues Asn-196, 225-230 (GYGWCG), Glu-248, Asn-283, 304-306 (SGH), and Asn-351.

It belongs to the adenosylhomocysteinase family. Requires NAD(+) as cofactor.

The protein localises to the cytoplasm. The catalysed reaction is S-adenosyl-L-homocysteine + H2O = L-homocysteine + adenosine. It participates in amino-acid biosynthesis; L-homocysteine biosynthesis; L-homocysteine from S-adenosyl-L-homocysteine: step 1/1. Functionally, may play a key role in the regulation of the intracellular concentration of adenosylhomocysteine. In Thermosynechococcus vestitus (strain NIES-2133 / IAM M-273 / BP-1), this protein is Adenosylhomocysteinase.